Consider the following 354-residue polypeptide: Allantoicase (354 aa).

This sequence belongs to the allantoicase family.

The enzyme catalyses allantoate + H2O = (S)-ureidoglycolate + urea. It participates in nitrogen metabolism; (S)-allantoin degradation; (S)-ureidoglycolate from allantoate (aminidohydrolase route): step 1/1. Functionally, utilization of purines as secondary nitrogen sources, when primary sources are limiting. The protein is Allantoicase (alc-1) of Neurospora crassa (strain ATCC 24698 / 74-OR23-1A / CBS 708.71 / DSM 1257 / FGSC 987).